We begin with the raw amino-acid sequence, 90 residues long: Small ribosomal subunit protein bS16 (90 aa).

It belongs to the bacterial ribosomal protein bS16 family.

The chain is Small ribosomal subunit protein bS16 from Lactobacillus acidophilus (strain ATCC 700396 / NCK56 / N2 / NCFM).